Here is a 178-residue protein sequence, read N- to C-terminus: MLTKERKKSLIDSFIYALESSPVILFVDFSGMSVLESNDFRLELYKNFGKDVVFTVYRTSLLKTAVKLANKELEDFEKFFEGSTGVIYAEESDPVDVLKAVKKFSESHNNKPFIKGGVLEGKIFDAAKAEEYAKLPSKQELYATVVRSLNSPISGLVNALSGNLRKVVYVINAIKEKK.

It belongs to the universal ribosomal protein uL10 family. Part of the ribosomal stalk of the 50S ribosomal subunit. The N-terminus interacts with L11 and the large rRNA to form the base of the stalk. The C-terminus forms an elongated spine to which L12 dimers bind in a sequential fashion forming a multimeric L10(L12)X complex.

Functionally, forms part of the ribosomal stalk, playing a central role in the interaction of the ribosome with GTP-bound translation factors. This chain is Large ribosomal subunit protein uL10, found in Petrotoga mobilis (strain DSM 10674 / SJ95).